The following is a 203-amino-acid chain: MMDESLVELATYLKNKLGNKLEETVFAFGELTIVARLDAITDVLMFVRDDSHCQFINLTDISGVDYPSRDKRFDVSYQLLSPRENLRLRVKVRTDENTPVASACTVYPGAEWYERETYDMYGILFSGHPDLRRILTDYGFEGYPLRKDFPVTGFVECRYDNEAKRVIYEPVVLRQEMRNFDFLSPWEGGQYVLPCDGKEDEKK.

Belongs to the complex I 30 kDa subunit family. As to quaternary structure, NDH-1 is composed of 14 different subunits. Subunits NuoB, C, D, E, F, and G constitute the peripheral sector of the complex.

It is found in the cell inner membrane. The enzyme catalyses a quinone + NADH + 5 H(+)(in) = a quinol + NAD(+) + 4 H(+)(out). In terms of biological role, NDH-1 shuttles electrons from NADH, via FMN and iron-sulfur (Fe-S) centers, to quinones in the respiratory chain. The immediate electron acceptor for the enzyme in this species is believed to be ubiquinone. Couples the redox reaction to proton translocation (for every two electrons transferred, four hydrogen ions are translocated across the cytoplasmic membrane), and thus conserves the redox energy in a proton gradient. This is NADH-quinone oxidoreductase subunit C from Bartonella tribocorum (strain CIP 105476 / IBS 506).